Here is a 419-residue protein sequence, read N- to C-terminus: UDP-N-acetylglucosamine 1-carboxyvinyltransferase (419 aa).

22–23 (KN) is a phosphoenolpyruvate binding site. Residue Arg-91 coordinates UDP-N-acetyl-alpha-D-glucosamine. Cys-115 (proton donor) is an active-site residue. Cys-115 carries the post-translational modification 2-(S-cysteinyl)pyruvic acid O-phosphothioketal. UDP-N-acetyl-alpha-D-glucosamine-binding positions include 120-124 (RPVDL), 160-163 (KVSV), Asp-305, and Val-327.

The protein belongs to the EPSP synthase family. MurA subfamily.

Its subcellular location is the cytoplasm. The enzyme catalyses phosphoenolpyruvate + UDP-N-acetyl-alpha-D-glucosamine = UDP-N-acetyl-3-O-(1-carboxyvinyl)-alpha-D-glucosamine + phosphate. It functions in the pathway cell wall biogenesis; peptidoglycan biosynthesis. Functionally, cell wall formation. Adds enolpyruvyl to UDP-N-acetylglucosamine. This Salmonella gallinarum (strain 287/91 / NCTC 13346) protein is UDP-N-acetylglucosamine 1-carboxyvinyltransferase.